A 1226-amino-acid polypeptide reads, in one-letter code: Methionine synthase (1226 aa).

Positions 6-326 (RAQIEAQLKQ…EHIRHMAMAV (321 aa)) constitute a Hcy-binding domain. Zn(2+)-binding residues include Cys-248, Cys-311, and Cys-312. One can recognise a Pterin-binding domain in the interval 357-618 (FVNVGERTNV…VPEKLREAVE (262 aa)). The B12-binding N-terminal domain occupies 651–745 (SALEWRTWSV…FINASKQVGS (95 aa)). Methylcob(III)alamin contacts are provided by residues Glu-695, 757–761 (GDVHD), His-760, Ser-805, Thr-809, and Ala-861. Positions 747–882 (NGKILLATVK…SDELRPAFVE (136 aa)) constitute a B12-binding domain. The region spanning 898–1226 (KKPRTKPVTL…EKWLGPNING (329 aa)) is the AdoMet activation domain. Residues Asp-948, Arg-1136, and 1191 to 1192 (YF) contribute to the S-adenosyl-L-methionine site.

Belongs to the vitamin-B12 dependent methionine synthase family. It depends on methylcob(III)alamin as a cofactor. Requires Zn(2+) as cofactor.

The catalysed reaction is (6S)-5-methyl-5,6,7,8-tetrahydrofolate + L-homocysteine = (6S)-5,6,7,8-tetrahydrofolate + L-methionine. It functions in the pathway amino-acid biosynthesis; L-methionine biosynthesis via de novo pathway; L-methionine from L-homocysteine (MetH route): step 1/1. Its function is as follows. Catalyzes the transfer of a methyl group from methyl-cobalamin to homocysteine, yielding enzyme-bound cob(I)alamin and methionine. Subsequently, remethylates the cofactor using methyltetrahydrofolate. The protein is Methionine synthase (metH) of Vibrio vulnificus (strain YJ016).